The chain runs to 327 residues: Regulatory protein MsrR (327 aa).

Positions 1–18 (MDKETNDNEYRRQSEHRT) are enriched in basic and acidic residues. The interval 1–24 (MDKETNDNEYRRQSEHRTSAPKRK) is disordered. The Cytoplasmic portion of the chain corresponds to 1–31 (MDKETNDNEYRRQSEHRTSAPKRKKKKKIRK). Residues 32–52 (LPIILLIVVILLIALVVYIVH) traverse the membrane as a helical; Signal-anchor for type II membrane protein segment. Residues 53-327 (SYNSGVEYAK…QAIKDFLDED (275 aa)) are Extracellular-facing.

It belongs to the LytR/CpsA/Psr (LCP) family.

Its subcellular location is the cell membrane. In terms of biological role, involved in SarA attenuation. Affects resistance to oxacillin and teicoplanin, as well as the synthesis of virulence factors. This chain is Regulatory protein MsrR (msrR), found in Staphylococcus aureus (strain NCTC 8325 / PS 47).